A 460-amino-acid polypeptide reads, in one-letter code: 4-O-methyl-glucuronoyl methylesterase (460 aa).

The signal sequence occupies residues 1–17; that stretch reads MASRFFALLLLAIPIQA. Glutamine 18 carries the post-translational modification Pyrrolidone carboxylic acid. Residues 18–53 form the CBM1 domain; sequence QSPVWGQCGGIGWSGPTTCVGGATCVSYNPYYSQCI. 3 disulfide bridges follow: cysteine 96–cysteine 131, cysteine 277–cysteine 412, and cysteine 309–cysteine 384. Residues 276–281 carry the GXSYXG catalytic site motif motif; the sequence is GCSRNG. The active-site Nucleophile is serine 278. Substrate is bound by residues lysine 282, glutamine 324, glutamate 332, and tryptophan 375. Histidine 411 functions as the Proton donor/acceptor in the catalytic mechanism. N-linked (GlcNAc...) asparagine glycosylation is present at asparagine 447.

The protein belongs to the carbohydrate esterase 15 (CE15) family.

It is found in the secreted. It carries out the reaction a 4-O-methyl-alpha-D-glucuronosyl ester derivative + H2O = 4-O-methyl-alpha-D-glucuronate derivative + an alcohol + H(+). In terms of biological role, glucuronoyl esterase which may play a significant role in biomass degradation, as it is considered to disconnect hemicellulose from lignin through the hydrolysis of the ester bond between 4-O-methyl-D-glucuronic acid residues of glucuronoxylans and aromatic alcohols of lignin. Does not hydrolyze substrates of other carbohydrate esterases such as acetylxylan esterase, acetyl esterase and feruloyl esterase. The protein is 4-O-methyl-glucuronoyl methylesterase of Hypocrea jecorina (strain QM6a) (Trichoderma reesei).